The chain runs to 569 residues: Proline--tRNA ligase (569 aa).

The protein belongs to the class-II aminoacyl-tRNA synthetase family. ProS type 1 subfamily. In terms of assembly, homodimer.

It is found in the cytoplasm. It catalyses the reaction tRNA(Pro) + L-proline + ATP = L-prolyl-tRNA(Pro) + AMP + diphosphate. Functionally, catalyzes the attachment of proline to tRNA(Pro) in a two-step reaction: proline is first activated by ATP to form Pro-AMP and then transferred to the acceptor end of tRNA(Pro). As ProRS can inadvertently accommodate and process non-cognate amino acids such as alanine and cysteine, to avoid such errors it has two additional distinct editing activities against alanine. One activity is designated as 'pretransfer' editing and involves the tRNA(Pro)-independent hydrolysis of activated Ala-AMP. The other activity is designated 'posttransfer' editing and involves deacylation of mischarged Ala-tRNA(Pro). The misacylated Cys-tRNA(Pro) is not edited by ProRS. The protein is Proline--tRNA ligase of Legionella pneumophila (strain Corby).